A 624-amino-acid chain; its full sequence is Outer dynein arm-docking complex subunit 4 (624 aa).

TPR repeat units lie at residues 11 to 44 (FPSY…QSGD), 46 to 78 (NCLV…DPTF), 79 to 112 (CKGI…RPDR), 273 to 309 (LKSL…NQEE), 318 to 351 (GNLY…AKEH), 358 to 391 (SRAL…AKTT), 395 to 428 (TWLF…AEEE), and 435 to 468 (LNAS…AKLV). The interval 511-624 (MSQMDLQGAS…VQKLEKTKEE (114 aa)) is disordered. 3 stretches are compositionally biased toward basic and acidic residues: residues 520–557 (SEKE…DRKS), 576–588 (IRRE…RRLS), and 595–624 (PSED…TKEE).

In terms of assembly, component of the outer dynein arm-docking complex along with ODAD1, ODAD2, and ODAD3. Interacts with ODAD1; this interaction may facilitate the recruitment and/or attachment of outer dynein arm docking complex proteins, including ODAD1, ODAD3 and ODAD2, to ciliary axonemes. Interacts with components of the IFT complex A, including IFT140, TTC21B/IFT139 and WDR19/IFT144, and the IFT complex B, including IFT46, IFT52 and IFT57. Interacts with CFAP53.

The protein localises to the cell projection. The protein resides in the cilium. Its subcellular location is the cytoplasm. It localises to the cytoskeleton. It is found in the cilium axoneme. Its function is as follows. Component of the outer dynein arm-docking complex (ODA-DC) that mediates outer dynein arms (ODA) binding onto the doublet microtubule. Plays an essential role for the assembly of ODA-DC and for the docking of ODA in ciliary axoneme. The protein is Outer dynein arm-docking complex subunit 4 (Odad4) of Mus musculus (Mouse).